Reading from the N-terminus, the 259-residue chain is Dihydroorotate dehydrogenase B (NAD(+)), electron transfer subunit (259 aa).

The FAD-binding FR-type domain occupies 3–103 (KKQGRLTIVK…LGPLGQGFPL (101 aa)). FAD-binding positions include 54–57 (RPIS), 71–73 (IYR), and 78–79 (GT). 4 residues coordinate [2Fe-2S] cluster: Cys-222, Cys-227, Cys-230, and Cys-246.

This sequence belongs to the PyrK family. In terms of assembly, heterotetramer of 2 PyrK and 2 PyrD type B subunits. [2Fe-2S] cluster serves as cofactor. FAD is required as a cofactor.

It functions in the pathway pyrimidine metabolism; UMP biosynthesis via de novo pathway; orotate from (S)-dihydroorotate (NAD(+) route): step 1/1. Functionally, responsible for channeling the electrons from the oxidation of dihydroorotate from the FMN redox center in the PyrD type B subunit to the ultimate electron acceptor NAD(+). In Shouchella clausii (strain KSM-K16) (Alkalihalobacillus clausii), this protein is Dihydroorotate dehydrogenase B (NAD(+)), electron transfer subunit.